The sequence spans 168 residues: Mediator of RNA polymerase II transcription subunit 31 (168 aa).

Acidic residues predominate over residues 113-159 (EGEDQDVEESEEETVENEQKESEDEEDVVIVEKPEDEQEEQAEEAAE). Positions 113–168 (EGEDQDVEESEEETVENEQKESEDEEDVVIVEKPEDEQEEQAEEAAEPTDTSLLNT) are disordered.

This sequence belongs to the Mediator complex subunit 31 family. Component of the Mediator complex.

It localises to the nucleus. Component of the Mediator complex, a coactivator involved in the regulated transcription of nearly all RNA polymerase II-dependent genes. Mediator functions as a bridge to convey information from gene-specific regulatory proteins to the basal RNA polymerase II transcription machinery. Mediator is recruited to promoters by direct interactions with regulatory proteins and serves as a scaffold for the assembly of a functional preinitiation complex with RNA polymerase II and the general transcription factors. The chain is Mediator of RNA polymerase II transcription subunit 31 (mdt-31) from Caenorhabditis briggsae.